The sequence spans 154 residues: Toxin YhaV (154 aa).

Homohexamer; forms a complex with PrlF (SohA) with stoichiometry PrlF(2)-YhaV(4), possibly as a YhaV(2)-PrlF(2)-YhaV(2) complex like the MazFE complex. May dimerize in solution.

In terms of biological role, toxic component of a type II toxin-antitoxin (TA) system. Has RNase activity in vitro. Acts as a transcription factor. The YhaV/PrlF complex binds the prlF-yhaV operon, probably negatively regulating its expression. In Escherichia coli O157:H7, this protein is Toxin YhaV (yhaV).